Here is a 165-residue protein sequence, read N- to C-terminus: Choriogonadotropin subunit beta 3 (165 aa).

A signal peptide spans 1–20; it reads MEMFQGLLLLLLLSMGGTWA. 6 disulfides stabilise this stretch: cysteine 29–cysteine 77, cysteine 43–cysteine 92, cysteine 46–cysteine 130, cysteine 54–cysteine 108, cysteine 58–cysteine 110, and cysteine 113–cysteine 120. Asparagine 33 and asparagine 50 each carry an N-linked (GlcNAc...) asparagine glycan. A disordered region spans residues 131 to 165; that stretch reads DDPRFQDSSSSKAPPPSLPSPSRLPGPSDTPILPQ. O-linked (GalNAc...) serine glycans are attached at residues serine 141, serine 147, serine 152, and serine 158. The span at 143-154 shows a compositional bias: pro residues; that stretch reads APPPSLPSPSRL.

Belongs to the glycoprotein hormones subunit beta family. As to quaternary structure, heterodimer of a common alpha chain identical in LH, FSH, TSH and HCG and a unique beta chain distinct in each of the hormones. As to expression, high expression in the placenta throughout pregnancy.

The protein localises to the secreted. In terms of biological role, beta subunit of the human chorionic gonadotropin (hCG). hCG is a complex glycoprotein composed of two glycosylated subunits alpha and beta which are non-covalently associated. The alpha subunit is identical to those in the pituitary gonadotropin hormones (LH, FSH and TSH). The beta subunits are distinct in each of the hormones and confer receptor and biological specificity. Has an essential role in pregnancy and maternal adaptation. Stimulates the ovaries to synthesize the steroids that are essential for the maintenance of pregnancy. The polypeptide is Choriogonadotropin subunit beta 3 (CGB3) (Homo sapiens (Human)).